The primary structure comprises 624 residues: 1-deoxy-D-xylulose-5-phosphate synthase (624 aa).

Thiamine diphosphate-binding positions include histidine 80 and glycine 121–serine 123. Residue aspartate 152 coordinates Mg(2+). Residues glycine 153–alanine 154, asparagine 181, tyrosine 288, and glutamate 370 each bind thiamine diphosphate. Asparagine 181 serves as a coordination point for Mg(2+).

The protein belongs to the transketolase family. DXPS subfamily. Homodimer. Mg(2+) is required as a cofactor. The cofactor is thiamine diphosphate.

The catalysed reaction is D-glyceraldehyde 3-phosphate + pyruvate + H(+) = 1-deoxy-D-xylulose 5-phosphate + CO2. Its pathway is metabolic intermediate biosynthesis; 1-deoxy-D-xylulose 5-phosphate biosynthesis; 1-deoxy-D-xylulose 5-phosphate from D-glyceraldehyde 3-phosphate and pyruvate: step 1/1. Catalyzes the acyloin condensation reaction between C atoms 2 and 3 of pyruvate and glyceraldehyde 3-phosphate to yield 1-deoxy-D-xylulose-5-phosphate (DXP). This Proteus mirabilis (strain HI4320) protein is 1-deoxy-D-xylulose-5-phosphate synthase.